A 905-amino-acid polypeptide reads, in one-letter code: Coatomer subunit beta' (905 aa).

WD repeat units follow at residues alanine 13 to threonine 52, valine 55 to methionine 94, alanine 97 to glutamine 136, glycine 140 to threonine 180, glycine 183 to threonine 224, glycine 227 to threonine 266, serine 350 to phenylalanine 388, and serine 390 to lysine 425. The residue at position 627 (lysine 627) is an N6-acetyllysine. One copy of the WD 9 repeat lies at isoleucine 746–lysine 783. Residues glutamate 837 to aspartate 905 form a disordered region. Serine 859 bears the Phosphoserine mark. A coiled-coil region spans residues glutamine 867–isoleucine 891. Acidic residues predominate over residues glutamate 878–aspartate 905.

Belongs to the WD repeat COPB2 family. As to quaternary structure, oligomeric complex that consists of at least the alpha, beta, beta', gamma, delta, epsilon and zeta subunits. Probably interacts with PEX11A. Interacts with JAGN1. Interacts with SCYL1.

Its subcellular location is the cytoplasm. It is found in the cytosol. It localises to the golgi apparatus membrane. The protein localises to the cytoplasmic vesicle. The protein resides in the COPI-coated vesicle membrane. Functionally, the coatomer is a cytosolic protein complex that binds to dilysine motifs and reversibly associates with Golgi non-clathrin-coated vesicles, which further mediate biosynthetic protein transport from the ER, via the Golgi up to the trans Golgi network. Coatomer complex is required for budding from Golgi membranes, and is essential for the retrograde Golgi-to-ER transport of dilysine-tagged proteins. In mammals, the coatomer can only be recruited by membranes associated to ADP-ribosylation factors (ARFs), which are small GTP-binding proteins; the complex also influences the Golgi structural integrity, as well as the processing, activity, and endocytic recycling of LDL receptors. Its function is as follows. This coatomer complex protein, essential for Golgi budding and vesicular trafficking, is a selective binding protein (RACK) for protein kinase C, epsilon type. It binds to Golgi membranes in a GTP-dependent manner. This chain is Coatomer subunit beta' (Copb2), found in Rattus norvegicus (Rat).